The sequence spans 134 residues: MQKEELTRDPNLTNPLVLAFLGDATYSHCVRYHLIAKGLVKPNQLHKAANRYVSAKAQANVLLTLMPTLPEEELNVVKRGRNAKSGSSAKNADIIDYRHATAFEALIGYLYLSGKEERIAEIVQQAFAIVEGES.

The active site involves Asp-23.

Belongs to the MrnC RNase family. In terms of assembly, homodimer. The cofactor is Mg(2+).

It localises to the cytoplasm. Its function is as follows. Involved in correct processing of both the 5' and 3' ends of 23S rRNA precursor. Processes 30S rRNA precursor transcript even in absence of ribonuclease 3 (Rnc); Rnc processes 30S rRNA into smaller rRNA precursors. This is Mini-ribonuclease 3 from Brevibacillus brevis (strain 47 / JCM 6285 / NBRC 100599).